A 215-amino-acid chain; its full sequence is Small ribosomal subunit protein uS7 (215 aa).

The protein belongs to the universal ribosomal protein uS7 family. In terms of assembly, part of the 30S ribosomal subunit.

One of the primary rRNA binding proteins, it binds directly to 16S rRNA where it nucleates assembly of the head domain of the 30S subunit. Is located at the subunit interface close to the decoding center. The sequence is that of Small ribosomal subunit protein uS7 from Thermococcus kodakarensis (strain ATCC BAA-918 / JCM 12380 / KOD1) (Pyrococcus kodakaraensis (strain KOD1)).